The primary structure comprises 493 residues: Maintenance of mitochondrial morphology protein 1 (493 aa).

Residues 1-23 are Lumenal-facing; the sequence is MSQHSQYGVPGVPAQSSLSFTQG. The chain crosses the membrane as a helical span at residues 24-44; that stretch reads FLLGQLSVVLLIGAFIKFFIF. Topologically, residues 45 to 493 are cytoplasmic; sequence GEAPAPPSRG…GSMPRVVRTP (449 aa). Positions 52–104 are disordered; sequence SRGLASRTASHHRSYSINQGDNNANNNTNNGSSPRTLREKPSTSNVLRPVPSS. Residues 69–81 are compositionally biased toward low complexity; it reads NQGDNNANNNTNN. The span at 93–104 shows a compositional bias: polar residues; it reads STSNVLRPVPSS. The SMP-LTD domain occupies 140 to 391; that stretch reads QPESLDWFNV…EPRVQVVGLP (252 aa). Residues 420-493 form a disordered region; sequence SSRSGGGPVE…GSMPRVVRTP (74 aa).

The protein belongs to the MMM1 family. As to quaternary structure, homodimer. Component of the ER-mitochondria encounter structure (ERMES) or MDM complex, composed of mmm1, mdm10, mdm12 and mdm34. A mmm1 homodimer associates with one molecule of mdm12 on each side in a pairwise head-to-tail manner, and the SMP-LTD domains of mmm1 and mdm12 generate a continuous hydrophobic tunnel for phospholipid trafficking.

The protein localises to the endoplasmic reticulum membrane. In terms of biological role, component of the ERMES/MDM complex, which serves as a molecular tether to connect the endoplasmic reticulum (ER) and mitochondria. Components of this complex are involved in the control of mitochondrial shape and protein biogenesis, and function in nonvesicular lipid trafficking between the ER and mitochondria. The mdm12-mmm1 subcomplex functions in the major beta-barrel assembly pathway that is responsible for biogenesis of all outer membrane beta-barrel proteins, and acts in a late step after the SAM complex. The mdm10-mdm12-mmm1 subcomplex further acts in the TOM40-specific pathway after the action of the mdm12-mmm1 complex. Essential for establishing and maintaining the structure of mitochondria and maintenance of mtDNA nucleoids. This is Maintenance of mitochondrial morphology protein 1 from Talaromyces stipitatus (strain ATCC 10500 / CBS 375.48 / QM 6759 / NRRL 1006) (Penicillium stipitatum).